Consider the following 114-residue polypeptide: Pole-localizer protein TmaR (114 aa).

Residues 70 to 111 (RDDYESRVDDYTIRNAELSKQRREASTKMKEQKKAHAELLKN) adopt a coiled-coil conformation. Positions 89 to 114 (KQRREASTKMKEQKKAHAELLKNAEK) are disordered.

This sequence belongs to the pole-localizer TmaR family.

The protein localises to the cytoplasm. In terms of biological role, pole-localizer protein involved in the regulation of several cellular processes. The protein is Pole-localizer protein TmaR of Haemophilus influenzae (strain PittEE).